The sequence spans 114 residues: UPF0102 protein HPG27_782 (114 aa).

The protein belongs to the UPF0102 family.

The sequence is that of UPF0102 protein HPG27_782 from Helicobacter pylori (strain G27).